The primary structure comprises 122 residues: MIQMQSILEVADNSGAKKVMCIKVLGGSHHMVAKLGDVIVVSVKDAIPGGKVKKGDVYKGLIVRTKTGVVRPDGSTIKFDQNALVLLNKQDEPIGTRVFGPVTRELRAKKYVRIMSLAEEVL.

It belongs to the universal ribosomal protein uL14 family. In terms of assembly, part of the 50S ribosomal subunit. Forms a cluster with proteins L3 and L19. In the 70S ribosome, L14 and L19 interact and together make contacts with the 16S rRNA in bridges B5 and B8.

Binds to 23S rRNA. Forms part of two intersubunit bridges in the 70S ribosome. This Rickettsia rickettsii (strain Iowa) protein is Large ribosomal subunit protein uL14.